A 682-amino-acid chain; its full sequence is Potassium-transporting ATPase ATP-binding subunit (682 aa).

Helical transmembrane passes span 34–54, 62–82, 219–239, and 254–274; these read PVMF…IAMA, ALFS…ANFA, IALT…TATL, and VLVA…LSAI. The active-site 4-aspartylphosphate intermediate is aspartate 307. ATP is bound by residues aspartate 344, glutamate 348, 377–384, and lysine 395; that span reads FTAQSRMS. Aspartate 518 and aspartate 522 together coordinate Mg(2+). 3 helical membrane-spanning segments follow: residues 588 to 608, 616 to 636, and 656 to 676; these read FAII…LNIM, AILS…PLAL, and IYGL…DLLL.

Belongs to the cation transport ATPase (P-type) (TC 3.A.3) family. Type IA subfamily. As to quaternary structure, the system is composed of three essential subunits: KdpA, KdpB and KdpC.

Its subcellular location is the cell inner membrane. The catalysed reaction is K(+)(out) + ATP + H2O = K(+)(in) + ADP + phosphate + H(+). In terms of biological role, part of the high-affinity ATP-driven potassium transport (or Kdp) system, which catalyzes the hydrolysis of ATP coupled with the electrogenic transport of potassium into the cytoplasm. This subunit is responsible for energy coupling to the transport system and for the release of the potassium ions to the cytoplasm. The sequence is that of Potassium-transporting ATPase ATP-binding subunit from Escherichia coli (strain UTI89 / UPEC).